The sequence spans 334 residues: Fructose-1,6-bisphosphatase class 1 (334 aa).

Mg(2+)-binding residues include glutamate 90, aspartate 113, leucine 115, and aspartate 116. Substrate is bound by residues 116–119, asparagine 209, tyrosine 242, and lysine 272; that span reads DGSS. Glutamate 278 contacts Mg(2+).

Belongs to the FBPase class 1 family. In terms of assembly, homotetramer. Mg(2+) serves as cofactor.

Its subcellular location is the cytoplasm. The enzyme catalyses beta-D-fructose 1,6-bisphosphate + H2O = beta-D-fructose 6-phosphate + phosphate. The protein operates within carbohydrate biosynthesis; gluconeogenesis. This chain is Fructose-1,6-bisphosphatase class 1, found in Actinobacillus succinogenes (strain ATCC 55618 / DSM 22257 / CCUG 43843 / 130Z).